Here is a 116-residue protein sequence, read N- to C-terminus: Nucleoid-associated protein MLBr02330 (116 aa).

Residues 96 to 116 (LTSAMRPTAPPPTPPTYMAGT) are disordered.

It belongs to the YbaB/EbfC family. As to quaternary structure, homodimer.

Its subcellular location is the cytoplasm. It localises to the nucleoid. Functionally, binds to DNA and alters its conformation. May be involved in regulation of gene expression, nucleoid organization and DNA protection. The protein is Nucleoid-associated protein MLBr02330 of Mycobacterium leprae (strain Br4923).